We begin with the raw amino-acid sequence, 673 residues long: Putative potassium transport system protein Kup 1 (673 aa).

13 helical membrane passes run 14–34 (GAGF…SPLY), 58–78 (LSLI…WIAL), 101–121 (WLII…ALTP), 147–167 (LPIV…QRFG), 175–195 (FGPV…INLF), 196–216 (GDFS…LLSP), 220–240 (AGIF…ALYS), 252–272 (VSWP…AAWL), 294–314 (LIIF…QALI), 345–365 (LYIP…VVYF), 374–394 (AYGL…TVYL), 403–423 (VFVV…FAAS), and 427–447 (FLHG…VMAI).

It belongs to the HAK/KUP transporter (TC 2.A.72) family.

It localises to the cell membrane. The enzyme catalyses K(+)(in) + H(+)(in) = K(+)(out) + H(+)(out). Its function is as follows. Transport of potassium into the cell. Likely operates as a K(+):H(+) symporter. The polypeptide is Putative potassium transport system protein Kup 1 (Lactococcus lactis subsp. cremoris (strain MG1363)).